A 556-amino-acid polypeptide reads, in one-letter code: (6-4)DNA photolyase (556 aa).

Positions 24 to 162 (SGSLIWFRKG…EVFSPVSHTL (139 aa)) constitute a Photolyase/cryptochrome alpha/beta domain. Glu262 provides a ligand contact to phosphate. FAD contacts are provided by residues Lys263, 276 to 280 (TTVMS), 317 to 321 (QLLWR), 380 to 383 (WMHH), Arg386, 415 to 417 (DSD), and Asn421. Residue Trp320 coordinates DNA. Residues 382–387 (HHLARH) form an interaction with DNA region. Residue Trp427 participates in DNA binding. The segment at 534–556 (LRRKLQKDEHEESKIRNQRPKLK) is disordered. Residues 539–548 (QKDEHEESKI) show a composition bias toward basic and acidic residues.

This sequence belongs to the DNA photolyase class-1 family. Requires FAD as cofactor. As to expression, expressed in siliques, flowers and leaves. Not detected in roots.

It catalyses the reaction (6-4) photoproduct (in DNA) = 2 pyrimidine residues (in DNA).. In terms of biological role, involved in repair of UV radiation-induced DNA damage. Catalyzes the photoreactivation of pyrimidine [6-4] pyrimidone photoproduct (6-4 products). Binds specifically to DNA containing 6-4 products and repairs these lesions in a visible light-dependent manner. Not required for repair of cyclobutane pyrimidine dimer (CPD). This chain is (6-4)DNA photolyase (UVR3), found in Arabidopsis thaliana (Mouse-ear cress).